We begin with the raw amino-acid sequence, 225 residues long: Cyclin-dependent kinase inhibitor 3 (225 aa).

Disordered stretches follow at residues 47 to 94 (AAAA…QRRR) and 130 to 169 (ERKSLKPNSCSREVAAEHAGEHKHNPAAAAAAGRRPPLSP). Basic residues predominate over residues 55–67 (CRRRHRRGGRRGC). Residues 71-82 (GAGSARACGARS) are compositionally biased toward low complexity. The segment covering 143–153 (VAAEHAGEHKH) has biased composition (basic and acidic residues).

This sequence belongs to the CDI family. ICK/KRP subfamily.

The protein is Cyclin-dependent kinase inhibitor 3 (KRP3) of Oryza sativa subsp. japonica (Rice).